We begin with the raw amino-acid sequence, 199 residues long: Tumor necrosis factor ligand superfamily member 4 (199 aa).

Residues 1 to 25 (MEGEGVQPPDENLENGSRPRFKWKK) are Cytoplasmic-facing. A helical; Signal-anchor for type II membrane protein transmembrane segment spans residues 26 to 48 (VLRLVVSGIKAAGLLLCVVYVCL). At 49–199 (QFSSSPAKDS…YSSTVNQVPL (151 aa)) the chain is on the extracellular side. A THD domain is found at 59–176 (PIQRLRAPVT…QINDGELIIV (118 aa)). Cystine bridges form between Cys70/Cys163 and Cys98/Cys184. Asn91 and Asn157 each carry an N-linked (GlcNAc...) asparagine glycan.

This sequence belongs to the tumor necrosis factor family. In terms of assembly, homotrimer. As to expression, detected in T-cell lines, but not in a macrophage cell line.

The protein resides in the membrane. Its function is as follows. Cytokine that binds to TNFRSF4. Co-stimulates T-cell proliferation and cytokine production. This is Tumor necrosis factor ligand superfamily member 4 (Tnfsf4) from Rattus norvegicus (Rat).